Reading from the N-terminus, the 768-residue chain is P-selectin (768 aa).

Positions 1–41 (MAGCPKGSWKPRLRSVVLGAAQLIWLSALISELVNRKKVAT) are cleaved as a signal peptide. Residues 42–709 (WTYNYSTKAY…QAGTLTIQEA (668 aa)) lie on the Extracellular side of the membrane. 3 N-linked (GlcNAc...) asparagine glycosylation sites follow: N45, N54, and N107. A C-type lectin domain is found at 58–158 (AFCKRHFTDL…PCFKRKRALC (101 aa)). Cystine bridges form between C60–C158, C131–C150, C168–C183, C185–C194, C200–C244, C230–C257, C262–C306, C292–C319, C324–C368, C354–C381, C386–C430, C416–C443, C448–C492, C478–C505, C510–C554, C540–C567, C580–C624, C610–C637, C642–C686, and C672–C699. E121, N123, and N124 together coordinate Ca(2+). N123 is an a carbohydrate binding site. A carbohydrate is bound by residues E133 and N146. The Ca(2+) site is built by N146 and D147. In terms of domain architecture, EGF-like spans 159–195 (YTASCQDMSCNSQGERIETIGSYTCSCYPGFYGPECE). 8 Sushi domains span residues 198 to 259 (QECG…QCKA), 260 to 321 (VQCQ…TCEA), 322 to 383 (IACE…VCEA), 384 to 445 (LQCQ…ECQA), 446 to 507 (VSCT…MCEA), 508 to 569 (IKCP…TCKG), 578 to 639 (VRCP…VCRA), and 640 to 701 (VKCS…TCQA). N212 is a glycosylation site (N-linked (GlcNAc...) asparagine). A glycan (N-linked (GlcNAc...) asparagine) is linked at N347. N456 is a glycosylation site (N-linked (GlcNAc...) asparagine). N603 carries N-linked (GlcNAc...) asparagine glycosylation. N654, N661, and N679 each carry an N-linked (GlcNAc...) asparagine glycan. A helical transmembrane segment spans residues 710 to 733 (LTYLGGALASTSGLAVGGTLLALL). The Cytoplasmic portion of the chain corresponds to 734–768 (RKRLRKKDDGKCPLNPHSHLGTYGVFTNAAYDPTP). The S-palmitoyl cysteine; alternate moiety is linked to residue C745. A lipid anchor (S-stearoyl cysteine; alternate) is attached at C745. Positions 756 to 759 (YGVF) match the Endocytosis signal motif. The interaction with SNX17 stretch occupies residues 759-768 (FTNAAYDPTP).

The protein belongs to the selectin/LECAM family. As to quaternary structure, interacts with SNX17. Interacts with SELPLG/PSGL1 and PODXL2 and mediates neutrophil adhesion and leukocyte rolling. This interaction requires the sialyl-Lewis X epitope of SELPLG and PODXL2, and specific tyrosine sulfation on SELPLG. Interacts (via C-type lectin domain) with alpha-IIb/beta3 integrin ITGA2B:ITGB3 and alpha-V/beta-3 integrin ITGAV:ITGB3. Interacts with alpha5/beta1 integrin ITGA5:ITGB1 and alpha4/beta1 integrin ITGA4:ITGB. Not detected in the absence of exposure to lipopolysaccharide (LPS). Detected only after exposure to lipopolysaccharide (LPS) in the tissues examined: spleen, lung, brain, liver, heart, kidney, thymus and small intestine.

Its subcellular location is the cell membrane. Functionally, ca(2+)-dependent receptor for myeloid cells that binds to carbohydrates on neutrophils and monocytes. Mediates the interaction of activated endothelial cells or platelets with leukocytes. The ligand recognized is sialyl-Lewis X. Mediates rapid rolling of leukocyte rolling over vascular surfaces during the initial steps in inflammation through interaction with SELPLG. Mediates cell-cell interactions and cell adhesion via the interaction with integrin alpha-IIb/beta3 (ITGA2B:ITGB3) and integrin alpha-V/beta-3 (ITGAV:ITGB3). This chain is P-selectin (Selp), found in Rattus norvegicus (Rat).